The sequence spans 502 residues: Glycerol kinase (502 aa).

An ADP-binding site is contributed by threonine 14. 3 residues coordinate ATP: threonine 14, threonine 15, and serine 16. Threonine 14 is a binding site for sn-glycerol 3-phosphate. Arginine 18 serves as a coordination point for ADP. Sn-glycerol 3-phosphate is bound by residues arginine 84, glutamate 85, tyrosine 136, and aspartate 246. Residues arginine 84, glutamate 85, tyrosine 136, aspartate 246, and glutamine 247 each contribute to the glycerol site. Positions 268 and 311 each coordinate ADP. Residues threonine 268, glycine 311, glutamine 315, and glycine 412 each coordinate ATP. Positions 412 and 416 each coordinate ADP.

The protein belongs to the FGGY kinase family. As to quaternary structure, homotetramer and homodimer (in equilibrium). Heterodimer with EIIA-Glc. Binds 1 zinc ion per glycerol kinase EIIA-Glc dimer. The zinc ion is important for dimerization.

The enzyme catalyses glycerol + ATP = sn-glycerol 3-phosphate + ADP + H(+). The protein operates within polyol metabolism; glycerol degradation via glycerol kinase pathway; sn-glycerol 3-phosphate from glycerol: step 1/1. Its activity is regulated as follows. Activity of this regulatory enzyme is affected by several metabolites. Allosterically and non-competitively inhibited by fructose 1,6-bisphosphate (FBP) and unphosphorylated phosphocarrier protein EIIA-Glc (III-Glc), an integral component of the bacterial phosphotransferase (PTS) system. Key enzyme in the regulation of glycerol uptake and metabolism. Catalyzes the phosphorylation of glycerol to yield sn-glycerol 3-phosphate. The chain is Glycerol kinase from Escherichia coli (strain ATCC 8739 / DSM 1576 / NBRC 3972 / NCIMB 8545 / WDCM 00012 / Crooks).